Here is a 147-residue protein sequence, read N- to C-terminus: MLSPKRTRFRKQHRGRMKGISSGGNHICFGKYALQALEPAWITSRQIEAGRRAMTRNARRGGKIWVRIFPDKPVTVRPAETRMGSGKGSPEYWVAVVKPGRILYEMGGVTKKIARRAISIAASKMPIRTQFISSEIEEKSKTTRKES.

Residues 1-17 show a composition bias toward basic residues; that stretch reads MLSPKRTRFRKQHRGRM. The tract at residues 1–20 is disordered; that stretch reads MLSPKRTRFRKQHRGRMKGI.

It belongs to the universal ribosomal protein uL16 family. Part of the 50S ribosomal subunit.

It localises to the plastid. The protein localises to the chloroplast. The sequence is that of Large ribosomal subunit protein uL16c from Ipomoea purpurea (Common morning glory).